A 278-amino-acid polypeptide reads, in one-letter code: Small ribosomal subunit protein uS3 (278 aa).

A KH type-2 domain is found at 39-107; sequence LRKAIAKKYV…KVQLNIVEIS (69 aa). Positions 244 to 278 are disordered; the sequence is AKPKRVTKKAEAEASAEEKPKRAAKKAENITKEEE. Residues 251-278 are compositionally biased toward basic and acidic residues; it reads KKAEAEASAEEKPKRAAKKAENITKEEE.

This sequence belongs to the universal ribosomal protein uS3 family. In terms of assembly, part of the 30S ribosomal subunit. Forms a tight complex with proteins S10 and S14.

Its function is as follows. Binds the lower part of the 30S subunit head. Binds mRNA in the 70S ribosome, positioning it for translation. This is Small ribosomal subunit protein uS3 from Dehalococcoides mccartyi (strain ATCC BAA-2266 / KCTC 15142 / 195) (Dehalococcoides ethenogenes (strain 195)).